Consider the following 379-residue polypeptide: Glutamate 5-kinase (379 aa).

Residue Lys15 participates in ATP binding. The substrate site is built by Ser56, Asp143, and Asn155. 175 to 176 lines the ATP pocket; that stretch reads SD. Positions 281–358 constitute a PUA domain; that stretch reads KGTLTIDAGA…CDAAQILGIS (78 aa).

This sequence belongs to the glutamate 5-kinase family.

It localises to the cytoplasm. It catalyses the reaction L-glutamate + ATP = L-glutamyl 5-phosphate + ADP. Its pathway is amino-acid biosynthesis; L-proline biosynthesis; L-glutamate 5-semialdehyde from L-glutamate: step 1/2. In terms of biological role, catalyzes the transfer of a phosphate group to glutamate to form L-glutamate 5-phosphate. The protein is Glutamate 5-kinase of Nitrobacter hamburgensis (strain DSM 10229 / NCIMB 13809 / X14).